Reading from the N-terminus, the 134-residue chain is MSWQTYVDEHLMCDVGDGQGHHLTAAAIVGHDGSVWAQSANFPQFKGQEFSDIMKDFDEPGHLAPTGLFMAGAKYMVIQGEPGAVIRGKKGAGGITIKKTGQSCVFGIYEEPVTPGQCNMVVERLGDYLLEQGL.

It belongs to the profilin family. In terms of assembly, occurs in many kinds of cells as a complex with monomeric actin in a 1:1 ratio. Specifically expressed in mature and germinating pollen grains, and growing pollen tubes (at protein level).

Its subcellular location is the cytoplasm. The protein localises to the cytoskeleton. In terms of biological role, binds to actin monomers and regulates the organization of the actin cytoskeleton. At high concentrations, profilin prevents the polymerization of actin, whereas it enhances it at low concentrations. At low concentrations, associates with the poly-proline motif of formins to enhance actin filament elongation rate. Acts redundantly with PRF5 to regulate apical actin polymerization at the tip of pollen tube and control polarized pollen tube growth. Functions probably by favoring formin-mediated actin polymerization at pollen tube tips. The protein is Profilin-4 of Arabidopsis thaliana (Mouse-ear cress).